The primary structure comprises 156 residues: dCTP deaminase (156 aa).

Residues 79 to 84 (RSSLAR), aspartate 95, glutamine 124, and tyrosine 138 contribute to the dCTP site.

The protein belongs to the dCTP deaminase family. Homotrimer.

It carries out the reaction dCTP + H2O + H(+) = dUTP + NH4(+). The protein operates within pyrimidine metabolism; dUMP biosynthesis; dUMP from dCTP (dUTP route): step 1/2. Functionally, catalyzes the deamination of dCTP to dUTP. The protein is dCTP deaminase of Pyrococcus furiosus (strain ATCC 43587 / DSM 3638 / JCM 8422 / Vc1).